The following is a 616-amino-acid chain: Formin-binding protein 1 (616 aa).

The tract at residues 1 to 79 (MSWGTELWDQ…CKAFLSTLNE (79 aa)) is required for self-association and induction of membrane tubulation. The region spanning 1 to 264 (MSWGTELWDQ…AAESIDQKND (264 aa)) is the F-BAR domain. Residues 1 to 334 (MSWGTELWDQ…KKNKLMSLLT (334 aa)) are interaction with microtubules. Lysine 66 and lysine 110 each carry N6-acetyllysine. Residues 67 to 259 (YTACKAFLST…DGIVKAAESI (193 aa)) are a coiled coil. Positions 251–616 (GIVKAAESID…VYLDKNAKGS (366 aa)) are required for self-association and induction of membrane tubulation. Disordered regions lie at residues 280–314 (GDIEFEDYTQPMKRTVSDNSLSSSKEGKPELRFGG) and 332–366 (LLTSPHQPPPPPPASASPSAVPNGPQSPKQPKEPL). Serine 296 and serine 299 each carry phosphoserine. Pro residues predominate over residues 337 to 346 (HQPPPPPPAS). Residues serine 348 and serine 358 each carry the phosphoserine modification. Positions 398–490 (PEDFSNFPPE…VEGRLPARSE (93 aa)) form a coiled coil. The segment at 399–551 (EDFSNFPPEQ…FDDEEPLPAI (153 aa)) is interaction with RND2. One can recognise an REM-1 domain in the interval 403–480 (NFPPEQRRKK…AQKFEAWLAE (78 aa)). Residues 487–531 (ARSEQARRQSGLYDGQTHQTVTNCAQDRESPDGSYTEEQSQESEH) are disordered. An interaction with PDE6G region spans residues 494 to 616 (RQSGLYDGQT…VYLDKNAKGS (123 aa)). Serine 496 carries the post-translational modification Phosphoserine. Position 499 is a phosphotyrosine (tyrosine 499). The segment covering 502–511 (QTHQTVTNCA) has biased composition (polar residues). Residues 513–616 (DRESPDGSYT…VYLDKNAKGS (104 aa)) form a required for interaction with TNKS region. Position 520 is a phosphoserine (serine 520). Positions 534–616 (LAPDFDDEFD…VYLDKNAKGS (83 aa)) are interaction with DNM1 and DNM3. The 62-residue stretch at 549–610 (PAIGTCKALY…PTSYVEVYLD (62 aa)) folds into the SH3 domain. The interval 549–616 (PAIGTCKALY…VYLDKNAKGS (68 aa)) is interaction with ARHGAP17, DAAM1, DIAPH1 and DIAPH2. The segment at 552–608 (GTCKALYTFEGQNEGTISVVEGETLSVIEEDKGDGWTRIRRNEDEEGYVPTSYVEVY) is interaction with DNM2 and WASL. The interval 552–609 (GTCKALYTFEGQNEGTISVVEGETLSVIEEDKGDGWTRIRRNEDEEGYVPTSYVEVYL) is interaction with FASLG.

Belongs to the FNBP1 family. In terms of assembly, homodimerizes, the dimers can polymerize end-to-end to form filamentous structures. Interacts specifically with GTP-bound RND2 and CDC42. Interacts with AKAP9, ARHGAP17, DAAM1, DIAPH1, DIAPH2, DNM1, DNM2, DNM3, FASLG/FASL, microtubules, PDE6G, SNX2 and WASL/N-WASP. May interact with TNKS. As to expression, expressed in brain and testis.

The protein localises to the cytoplasm. The protein resides in the cytoskeleton. Its subcellular location is the cell cortex. It is found in the lysosome. It localises to the cytoplasmic vesicle. The protein localises to the cell membrane. The protein resides in the membrane. Its subcellular location is the clathrin-coated pit. Required to coordinate membrane tubulation with reorganization of the actin cytoskeleton during the late stage of clathrin-mediated endocytosis. Binds to lipids such as phosphatidylinositol 4,5-bisphosphate and phosphatidylserine and promotes membrane invagination and the formation of tubules. Also enhances actin polymerization via the recruitment of WASL/N-WASP, which in turn activates the Arp2/3 complex. Actin polymerization may promote the fission of membrane tubules to form endocytic vesicles. May act as a link between RND2 signaling and regulation of the actin cytoskeleton. May be required for the lysosomal retention of FASLG/FASL. The chain is Formin-binding protein 1 (Fnbp1) from Mus musculus (Mouse).